Reading from the N-terminus, the 520-residue chain is Cholesterol side-chain cleavage enzyme, mitochondrial (520 aa).

The N-terminal 39 residues, 1–39 (MLVRGLPLRSVLVKGCQPLLSAPREGPGHPRVPTGEGAG), are a transit peptide targeting the mitochondrion. The tract at residues 19-47 (LLSAPREGPGHPRVPTGEGAGMSSHSPRP) is disordered. Position 461 (cysteine 461) interacts with heme.

This sequence belongs to the cytochrome P450 family. As to quaternary structure, interacts with FDX1/adrenodoxin. Heme is required as a cofactor.

The protein resides in the mitochondrion inner membrane. It carries out the reaction 6 reduced [adrenodoxin] + cholesterol + 3 O2 + 6 H(+) = 4-methylpentanal + pregnenolone + 6 oxidized [adrenodoxin] + 4 H2O. It catalyses the reaction 2 reduced [adrenodoxin] + cholesterol + O2 + 2 H(+) = (22R)-hydroxycholesterol + 2 oxidized [adrenodoxin] + H2O. The catalysed reaction is (22R)-hydroxycholesterol + 2 reduced [adrenodoxin] + O2 + 2 H(+) = (20R,22R)-20,22-dihydroxycholesterol + 2 oxidized [adrenodoxin] + H2O. The enzyme catalyses (20R,22R)-20,22-dihydroxycholesterol + 2 reduced [adrenodoxin] + O2 + 2 H(+) = 4-methylpentanal + pregnenolone + 2 oxidized [adrenodoxin] + 2 H2O. It functions in the pathway lipid metabolism; C21-steroid hormone metabolism. The protein operates within steroid metabolism; cholesterol metabolism. In terms of biological role, a cytochrome P450 monooxygenase that catalyzes the side-chain hydroxylation and cleavage of cholesterol to pregnenolone, the precursor of most steroid hormones. Catalyzes three sequential oxidation reactions of cholesterol, namely the hydroxylation at C22 followed with the hydroxylation at C20 to yield 20R,22R-hydroxycholesterol that is further cleaved between C20 and C22 to yield the C21-steroid pregnenolone and 4-methylpentanal. Mechanistically, uses molecular oxygen inserting one oxygen atom into a substrate and reducing the second into a water molecule. Two electrons are provided by NADPH via a two-protein mitochondrial transfer system comprising flavoprotein FDXR (adrenodoxin/ferredoxin reductase) and nonheme iron-sulfur protein FDX1 or FDX2 (adrenodoxin/ferredoxin). The polypeptide is Cholesterol side-chain cleavage enzyme, mitochondrial (CYP11A1) (Equus caballus (Horse)).